The following is a 503-amino-acid chain: ATP synthase subunit beta (503 aa).

ATP is bound at residue 157 to 164; it reads GGAGVGKT.

Belongs to the ATPase alpha/beta chains family. As to quaternary structure, F-type ATPases have 2 components, CF(1) - the catalytic core - and CF(0) - the membrane proton channel. CF(1) has five subunits: alpha(3), beta(3), gamma(1), delta(1), epsilon(1). CF(0) has three main subunits: a(1), b(2) and c(9-12). The alpha and beta chains form an alternating ring which encloses part of the gamma chain. CF(1) is attached to CF(0) by a central stalk formed by the gamma and epsilon chains, while a peripheral stalk is formed by the delta and b chains.

It localises to the cell membrane. It carries out the reaction ATP + H2O + 4 H(+)(in) = ADP + phosphate + 5 H(+)(out). In terms of biological role, produces ATP from ADP in the presence of a proton gradient across the membrane. The catalytic sites are hosted primarily by the beta subunits. The protein is ATP synthase subunit beta of Christiangramia forsetii (strain DSM 17595 / CGMCC 1.15422 / KT0803) (Gramella forsetii).